The following is a 288-amino-acid chain: MSNLKQLRTRIKSVKSTQKITKAMQLVSASKMTKIKSQIANSNFYIEAISKMMSAILAIDMYELSIEGQKFFNTVPNKVNLLIVMTSQRGLCGTFNYNIIKQVKNDIKDLENKGKQIKLIIIGKKGYEALKRQYANYIDSYFELSKIHDEKLILQVKQKIMSAAYNLEVSNCVIYFNKFKNAMTQIMTRQQILPVEKSKDDSTVKKYHYEYEGETLISNLISLYVNSQINYALLQNRASEEGARMTAMENATNNANDLISKLVLKLNRSRQAIITKELIEIIAGSEAV.

It belongs to the ATPase gamma chain family. As to quaternary structure, F-type ATPases have 2 components, CF(1) - the catalytic core - and CF(0) - the membrane proton channel. CF(1) has five subunits: alpha(3), beta(3), gamma(1), delta(1), epsilon(1). CF(0) has three main subunits: a, b and c.

Its subcellular location is the cell inner membrane. In terms of biological role, produces ATP from ADP in the presence of a proton gradient across the membrane. The gamma chain is believed to be important in regulating ATPase activity and the flow of protons through the CF(0) complex. The chain is ATP synthase gamma chain from Rickettsia canadensis (strain McKiel).